The chain runs to 406 residues: Kelch domain-containing protein 2 (406 aa).

Kelch repeat units lie at residues 31–85 (ERSG…NTEG), 92–136 (SGSC…ERID), 148–207 (LGVW…IWSQ), 221–259 (HACA…NELI), 271–311 (HSLT…IKFN), and 322–359 (HTAC…IFSV).

In terms of assembly, component of a CRL2(KLHDC2) E3 ubiquitin-protein ligase complex, also named ECS(KLHDC2) complex, composed of CUL2, Elongin BC (ELOB and ELOC), RBX1 and substrate-specific adapter KLHDC2. May form oligomers as a KLHDC2-ELOB-ELOC complex; this interaction is autoinhibitory for the E3 ligase complex as the substrate-binding site of KLHDC2 is blocked in the oligomer. Interacts with CREB3; interaction is direct and specific as it does not interact with CREB1, ATF4, ATF6, JUN, FOS, CEBPA or herpes simplex virus transactivator VP16. Autoubiquitinated by the CRL2(KLHDC2) E3 ligase complex.

Its subcellular location is the nucleus. Its pathway is protein modification; protein ubiquitination. Its function is as follows. Substrate-recognition component of a Cul2-RING (CRL2) E3 ubiquitin-protein ligase complex of the DesCEND (destruction via C-end degrons) pathway, which recognizes a C-degron located at the extreme C terminus of target proteins, leading to their ubiquitination and degradation. The C-degron recognized by the DesCEND pathway is usually a motif of less than ten residues and can be present in full-length proteins, truncated proteins or proteolytically cleaved forms. The CRL2(KLHDC2) complex specifically recognizes proteins with a diglycine (Gly-Gly) at the C-terminus, leading to their ubiquitination and degradation. The CRL2(KLHDC2) complex mediates ubiquitination and degradation of truncated SELENOK and SELENOS selenoproteins produced by failed UGA/Sec decoding, which end with a diglycine. The CRL2(KLHDC2) complex also recognizes proteolytically cleaved proteins ending with Gly-Gly, such as the N-terminal fragment of USP1, leading to their degradation. May also act as an indirect repressor of CREB3-mediated transcription by interfering with CREB3-DNA-binding. The sequence is that of Kelch domain-containing protein 2 from Bos taurus (Bovine).